The sequence spans 723 residues: Polyribonucleotide nucleotidyltransferase (723 aa).

2 residues coordinate Mg(2+): aspartate 488 and aspartate 494. In terms of domain architecture, KH spans proline 555–isoleucine 614. Residues glycine 624 to lysine 692 form the S1 motif domain. The tract at residues lysine 692 to lysine 723 is disordered. The segment covering alanine 693–lysine 723 has biased composition (basic and acidic residues).

The protein belongs to the polyribonucleotide nucleotidyltransferase family. It depends on Mg(2+) as a cofactor.

The protein localises to the cytoplasm. The catalysed reaction is RNA(n+1) + phosphate = RNA(n) + a ribonucleoside 5'-diphosphate. Functionally, involved in mRNA degradation. Catalyzes the phosphorolysis of single-stranded polyribonucleotides processively in the 3'- to 5'-direction. The sequence is that of Polyribonucleotide nucleotidyltransferase from Listeria monocytogenes serovar 1/2a (strain ATCC BAA-679 / EGD-e).